Here is a 408-residue protein sequence, read N- to C-terminus: Arylacetamide deacetylase-like 3 (408 aa).

The next 3 helical transmembrane spans lie at 2 to 22 (VVLALTLLVGSVAVFSLGSLL), 46 to 66 (ILSCLFHLTMTWGMIFEKLGL), and 109 to 129 (SSIPRLGIIFFHGGGTIIGSL). The Involved in the stabilization of the negatively charged intermediate by the formation of the oxyanion hole motif lies at 120-122 (HGG). Residue Ser-194 is part of the active site. A glycan (N-linked (GlcNAc...) asparagine) is linked at Asn-321. Residues Asp-348 and His-378 contribute to the active site.

The protein belongs to the 'GDXG' lipolytic enzyme family.

Its subcellular location is the membrane. The sequence is that of Arylacetamide deacetylase-like 3 (Aadacl3) from Mus musculus (Mouse).